The chain runs to 422 residues: Probable Na(+)/H(+) antiporter 2 (422 aa).

13 consecutive transmembrane segments (helical) span residues 3–23, 28–48, 52–72, 93–113, 119–139, 157–177, 183–203, 216–236, 242–262, 281–301, 307–327, 341–361, and 384–404; these read IVLF…IAKI, GIPD…LNVI, IVES…LFIG, ILAL…VFHL, IGLL…IPIF, VFND…LGLA, ILEF…AGKF, YIAP…EGIF, YEIS…NVIV, LSIF…SIPL, LPAF…GVLI, IYLA…AMVY, and LAGT…VLEA.

This sequence belongs to the monovalent cation:proton antiporter 1 (CPA1) transporter (TC 2.A.36) family.

It is found in the cell membrane. Functionally, this is probably a Na(+)/H(+) antiporter. The chain is Probable Na(+)/H(+) antiporter 2 from Methanocaldococcus jannaschii (strain ATCC 43067 / DSM 2661 / JAL-1 / JCM 10045 / NBRC 100440) (Methanococcus jannaschii).